Consider the following 166-residue polypeptide: Regulatory protein RecX (166 aa).

The protein belongs to the RecX family.

The protein localises to the cytoplasm. In terms of biological role, modulates RecA activity. The protein is Regulatory protein RecX of Salmonella choleraesuis (strain SC-B67).